Here is a 1072-residue protein sequence, read N- to C-terminus: Vacuolar membrane protease (1072 aa).

At 1 to 9 the chain is on the cytoplasmic side; it reads MINPISFRP. Residues 10 to 30 traverse the membrane as a helical segment; sequence GPVTFWTTLIYLALLIPIVII. The Vacuolar portion of the chain corresponds to 31–404; the sequence is NEKTPAAPKT…SFVLFGLRGM (374 aa). N-linked (GlcNAc...) asparagine glycosylation is found at N48, N116, N119, and N128. Positions 185 and 197 each coordinate Zn(2+). E231 acts as the Proton acceptor in catalysis. Positions 232, 257, and 330 each coordinate Zn(2+). A helical membrane pass occupies residues 405 to 425; it reads FAWSLTLLIATPLVLVGITWL. Residues 426–457 lie on the Cytoplasmic side of the membrane; the sequence is LRNLDKDYFFTSTVKTKEHPEYEAVPIGGWKG. Residues 458–478 traverse the membrane as a helical segment; that stretch reads FFRFPFALGVAVFFTISSALL. The Vacuolar portion of the chain corresponds to 479–492; the sequence is MNKVNPLIVYSSRY. A helical membrane pass occupies residues 493 to 513; that stretch reads SVWVMMVSIFYFSFWMIMRGA. Residues 514-523 are Cytoplasmic-facing; the sequence is NFVRPSALHR. A helical membrane pass occupies residues 524–544; the sequence is GYANLWLFVFGWIVLVAVTAL. Residues 545–554 lie on the Vacuolar side of the membrane; the sequence is EDRRRIAAGY. Residues 555–575 traverse the membrane as a helical segment; the sequence is IFVFLESAIFLSCLISFVELL. At 576-747 the chain is on the cytoplasmic side; the sequence is AVPRKSSYAL…YDHEQEWSGH (172 aa). Positions 593-713 are disordered; sequence GQEHDHNGYQ…GTNDRGRTTF (121 aa). Residues 606–617 are compositionally biased toward basic and acidic residues; that stretch reads DSTDEPSLRARA. Positions 643–661 are enriched in polar residues; that stretch reads GTTNGLSTAPSVAAHSSQP. Residues 748–768 form a helical membrane-spanning segment; sequence LPSWAWFFQFLLLGPFMIILA. At 769–789 the chain is on the vacuolar side; sequence AQTGLMLTDAVYQTGSDGSKL. The helical transmembrane segment at 790 to 810 threads the bilayer; the sequence is ITPYLIIFVFTVLLILPLTPF. Residues 811–817 are Cytoplasmic-facing; the sequence is IHRVTHH. A helical membrane pass occupies residues 818–838; it reads IPVFLLVVFIVTLTYNLIAFP. At 839-1072 the chain is on the vacuolar side; sequence FSANNRYKTF…VEGRKAFKIV (234 aa). 2 N-linked (GlcNAc...) asparagine glycosylation sites follow: N932 and N974.

This sequence belongs to the peptidase M28 family. Requires Zn(2+) as cofactor.

It localises to the vacuole membrane. Functionally, may be involved in vacuolar sorting and osmoregulation. This Neurospora crassa (strain ATCC 24698 / 74-OR23-1A / CBS 708.71 / DSM 1257 / FGSC 987) protein is Vacuolar membrane protease.